Reading from the N-terminus, the 448-residue chain is UPF0210 protein Pisl_0759 (448 aa).

This sequence belongs to the UPF0210 family.

The polypeptide is UPF0210 protein Pisl_0759 (Pyrobaculum islandicum (strain DSM 4184 / JCM 9189 / GEO3)).